We begin with the raw amino-acid sequence, 279 residues long: S-methyl-5'-thioadenosine phosphorylase (279 aa).

Phosphate contacts are provided by residues Ser-28, Arg-70–His-71, and Ser-103–Ala-104. Position 202 (Met-202) interacts with substrate. Position 203 (Thr-203) interacts with phosphate. A substrate-binding site is contributed by Asp-226–Asp-228.

Belongs to the PNP/MTAP phosphorylase family. MTAP subfamily. In terms of assembly, homohexamer. Dimer of a homotrimer.

The enzyme catalyses S-methyl-5'-thioadenosine + phosphate = 5-(methylsulfanyl)-alpha-D-ribose 1-phosphate + adenine. It participates in amino-acid biosynthesis; L-methionine biosynthesis via salvage pathway; S-methyl-5-thio-alpha-D-ribose 1-phosphate from S-methyl-5'-thioadenosine (phosphorylase route): step 1/1. Catalyzes the reversible phosphorylation of S-methyl-5'-thioadenosine (MTA) to adenine and 5-methylthioribose-1-phosphate. Involved in the breakdown of MTA, a major by-product of polyamine biosynthesis. Responsible for the first step in the methionine salvage pathway after MTA has been generated from S-adenosylmethionine. Has broad substrate specificity with 6-aminopurine nucleosides as preferred substrates. The protein is S-methyl-5'-thioadenosine phosphorylase of Pyrobaculum aerophilum (strain ATCC 51768 / DSM 7523 / JCM 9630 / CIP 104966 / NBRC 100827 / IM2).